Consider the following 187-residue polypeptide: GTP cyclohydrolase 1 (187 aa).

Residues Cys76, His79, and Cys148 each coordinate Zn(2+).

The protein belongs to the GTP cyclohydrolase I family. As to quaternary structure, toroid-shaped homodecamer, composed of two pentamers of five dimers.

It carries out the reaction GTP + H2O = 7,8-dihydroneopterin 3'-triphosphate + formate + H(+). Its pathway is cofactor biosynthesis; 7,8-dihydroneopterin triphosphate biosynthesis; 7,8-dihydroneopterin triphosphate from GTP: step 1/1. This chain is GTP cyclohydrolase 1, found in Acetivibrio thermocellus (strain ATCC 27405 / DSM 1237 / JCM 9322 / NBRC 103400 / NCIMB 10682 / NRRL B-4536 / VPI 7372) (Clostridium thermocellum).